Reading from the N-terminus, the 120-residue chain is Seripauperin-10 (120 aa).

Residues 1–20 (MVKLTSIAAGVAAIAATASA) form the signal peptide.

Belongs to the SRP1/TIP1 family. Seripauperin subfamily.

This is Seripauperin-10 (PAU10) from Saccharomyces cerevisiae (strain ATCC 204508 / S288c) (Baker's yeast).